Consider the following 433-residue polypeptide: 2,2-dialkylglycine decarboxylase (433 aa).

Residue Lys272 is modified to N6-(pyridoxal phosphate)lysine.

Belongs to the class-III pyridoxal-phosphate-dependent aminotransferase family. Homotetramer. Requires pyridoxal 5'-phosphate as cofactor.

The enzyme catalyses 2,2-dialkylglycine + pyruvate + H(+) = dialkyl ketone + L-alanine + CO2. Its function is as follows. The dialkylglycine decarboxylase is of interest because it normally catalyzes both decarboxylation and amino transfer. It may be more properly described as a decarboxylating aminotransferase rather than an aminotransferring decarboxylase. This is 2,2-dialkylglycine decarboxylase (dgdA) from Burkholderia cepacia (Pseudomonas cepacia).